A 360-amino-acid chain; its full sequence is GTP 3',8-cyclase 2 (360 aa).

The Radical SAM core domain maps to 33 to 259 (TFGRVANDLR…PDPAPRGSAP (227 aa)). Arg-42 serves as a coordination point for GTP. Residues Cys-49 and Cys-53 each coordinate [4Fe-4S] cluster. Tyr-55 is a binding site for S-adenosyl-L-methionine. Cys-56 is a [4Fe-4S] cluster binding site. Residue Arg-93 coordinates GTP. Gly-97 lines the S-adenosyl-L-methionine pocket. Thr-124 lines the GTP pocket. An S-adenosyl-L-methionine-binding site is contributed by Ser-148. Lys-185 contributes to the GTP binding site. Residue Met-219 coordinates S-adenosyl-L-methionine. The [4Fe-4S] cluster site is built by Cys-287 and Cys-290. 292–294 (RTR) contributes to the GTP binding site. Cys-304 provides a ligand contact to [4Fe-4S] cluster.

It belongs to the radical SAM superfamily. MoaA family. In terms of assembly, monomer and homodimer. [4Fe-4S] cluster serves as cofactor.

It carries out the reaction GTP + AH2 + S-adenosyl-L-methionine = (8S)-3',8-cyclo-7,8-dihydroguanosine 5'-triphosphate + 5'-deoxyadenosine + L-methionine + A + H(+). It functions in the pathway cofactor biosynthesis; molybdopterin biosynthesis. Its function is as follows. Catalyzes the cyclization of GTP to (8S)-3',8-cyclo-7,8-dihydroguanosine 5'-triphosphate. The polypeptide is GTP 3',8-cyclase 2 (Mycobacterium bovis (strain ATCC BAA-935 / AF2122/97)).